We begin with the raw amino-acid sequence, 430 residues long: MTNVVVVGAQWGDEGKGKIVDWLSEQADIVVRFQGGHNAGHTLVIDGNTYKLALLPSGVVRSSKLSIIGNGVVFDPQAFVDEVAKLKGQGVKIGPDNLRVAENVTLILPLHRELDSLRENASAATAIGTTQRGIGPAYEDKVGRRAIRLMDLADPQTLPHKVERLLTHHNALRRGHGIAEVDSGALLKDLAAIAPRVLPYADSVWNLLDHKRREGKRILFEGAQGALLDVDHGTYPYVTSSNTVAAQAATGTGMGPSALGYVLGICKSYTTRVGQGPFPTELKDEIGELIGQRGKEFGVNTGRKRRCGWFDAMLVRQTVRTSGIHGLALTKLDILDGFDTIEVCTGYRLDGKEIDHLPAGEGAQARVEPIYETIEGWKQPTANARSWADLPAQAIKYVRRIEELVGCPVALLSTSPEREDTILVQNPFEA.

GTP contacts are provided by residues 12–18 (GDEGKGK) and 40–42 (GHT). Asp13 (proton acceptor) is an active-site residue. Mg(2+) is bound by residues Asp13 and Gly40. IMP is bound by residues 13-16 (DEGK), 38-41 (NAGH), Thr130, Arg144, Gln224, Thr239, and Arg303. His41 serves as the catalytic Proton donor. 299–305 (VNTGRKR) serves as a coordination point for substrate. Residues Arg305, 331–333 (KLD), and 413–415 (STS) contribute to the GTP site.

This sequence belongs to the adenylosuccinate synthetase family. Homodimer. Mg(2+) is required as a cofactor.

It is found in the cytoplasm. It carries out the reaction IMP + L-aspartate + GTP = N(6)-(1,2-dicarboxyethyl)-AMP + GDP + phosphate + 2 H(+). The protein operates within purine metabolism; AMP biosynthesis via de novo pathway; AMP from IMP: step 1/2. In terms of biological role, plays an important role in the de novo pathway of purine nucleotide biosynthesis. Catalyzes the first committed step in the biosynthesis of AMP from IMP. This Nitrobacter hamburgensis (strain DSM 10229 / NCIMB 13809 / X14) protein is Adenylosuccinate synthetase.